The primary structure comprises 274 residues: NH(3)-dependent NAD(+) synthetase (274 aa).

Residue 46–53 coordinates ATP; it reads GISGGQDS. Position 52 (D52) interacts with Mg(2+). Deamido-NAD(+) is bound at residue R140. T160 serves as a coordination point for ATP. E165 serves as a coordination point for Mg(2+). Residues K173 and D180 each coordinate deamido-NAD(+). 2 residues coordinate ATP: K189 and T211. 260 to 261 lines the deamido-NAD(+) pocket; that stretch reads HK.

The protein belongs to the NAD synthetase family. In terms of assembly, homodimer.

It carries out the reaction deamido-NAD(+) + NH4(+) + ATP = AMP + diphosphate + NAD(+) + H(+). It participates in cofactor biosynthesis; NAD(+) biosynthesis; NAD(+) from deamido-NAD(+) (ammonia route): step 1/1. Functionally, catalyzes the ATP-dependent amidation of deamido-NAD to form NAD. Uses ammonia as a nitrogen source. The chain is NH(3)-dependent NAD(+) synthetase from Streptococcus equi subsp. zooepidemicus (strain MGCS10565).